The primary structure comprises 166 residues: P2Y purinoceptor 2 (166 aa).

At 1–24 (VHRCLGVLRPLHSLRWGRARYARR) the chain is on the cytoplasmic side. Residues 25 to 45 (VAAVVWVLVLACQAPVLYFVT) form a helical membrane-spanning segment. At 46–72 (TSVRGTRITCHDTSARELFSHFVAYSS) the chain is on the extracellular side. A helical transmembrane segment spans residues 73–93 (VMLSLLFAVPFSVILVCYVLM). At 94–115 (ARRLLKPAYGTTGGLPRAKRKS) the chain is on the cytoplasmic side. A helical membrane pass occupies residues 116–136 (VRTIALVLAVFTLCFLPFHVT). The Extracellular segment spans residues 137–159 (RTLYYSFRSLDLSCHTLNAINMA). Residues 160 to 166 (YKITRPL) traverse the membrane as a helical segment.

Belongs to the G-protein coupled receptor 1 family.

It localises to the cell membrane. In terms of biological role, receptor for ATP and UTP coupled to G-proteins that activate a phosphatidylinositol-calcium second messenger system. The chain is P2Y purinoceptor 2 (P2RY2) from Cricetulus griseus (Chinese hamster).